Here is a 436-residue protein sequence, read N- to C-terminus: Chromosomal replication initiator protein DnaA (436 aa).

The interval 1-80 is domain I, interacts with DnaA modulators; that stretch reads MSHEAVWQHV…QAPRFELRVV (80 aa). A domain II region spans residues 80 to 100; that stretch reads VPGVVVQEDIFQAAPAEAPRP. The tract at residues 101–317 is domain III, AAA+ region; it reads KLNPKYTFEN…GALMRAIAFA (217 aa). Residues Gly145, Gly147, Lys148, and Thr149 each contribute to the ATP site. Positions 318 to 436 are domain IV, binds dsDNA; it reads SLNGVELTRA…LLRTLREACT (119 aa).

This sequence belongs to the DnaA family. As to quaternary structure, oligomerizes as a right-handed, spiral filament on DNA at oriC.

The protein localises to the cytoplasm. Plays an essential role in the initiation and regulation of chromosomal replication. ATP-DnaA binds to the origin of replication (oriC) to initiate formation of the DNA replication initiation complex once per cell cycle. Binds the DnaA box (a 9 base pair repeat at the origin) and separates the double-stranded (ds)DNA. Forms a right-handed helical filament on oriC DNA; dsDNA binds to the exterior of the filament while single-stranded (ss)DNA is stabiized in the filament's interior. The ATP-DnaA-oriC complex binds and stabilizes one strand of the AT-rich DNA unwinding element (DUE), permitting loading of DNA polymerase. After initiation quickly degrades to an ADP-DnaA complex that is not apt for DNA replication. Binds acidic phospholipids. The protein is Chromosomal replication initiator protein DnaA of Thermus thermophilus (strain ATCC BAA-163 / DSM 7039 / HB27).